The sequence spans 398 residues: Argininosuccinate synthase (398 aa).

An ATP-binding site is contributed by 9–17; the sequence is AYSGGLDTS. Tyrosine 85 contacts L-citrulline. Glycine 115 is an ATP binding site. L-aspartate contacts are provided by threonine 117, asparagine 121, and aspartate 122. Asparagine 121 is a binding site for L-citrulline. L-citrulline is bound by residues arginine 125, serine 173, glutamate 258, and tyrosine 270.

It belongs to the argininosuccinate synthase family. Type 1 subfamily. Homotetramer.

It localises to the cytoplasm. The catalysed reaction is L-citrulline + L-aspartate + ATP = 2-(N(omega)-L-arginino)succinate + AMP + diphosphate + H(+). It participates in amino-acid biosynthesis; L-arginine biosynthesis; L-arginine from L-ornithine and carbamoyl phosphate: step 2/3. This chain is Argininosuccinate synthase, found in Streptococcus pneumoniae (strain Hungary19A-6).